A 48-amino-acid chain; its full sequence is SPbeta prophage-derived uncharacterized protein YotE (48 aa).

The protein is SPbeta prophage-derived uncharacterized protein YotE (yotE) of Bacillus subtilis (strain 168).